Here is a 251-residue protein sequence, read N- to C-terminus: UstYa family oxidase phomYb (251 aa).

Residues 1–47 (MDGYSSKKPRSASPSRSSLTEVEEEERDTLLKTVSLEEEDKSGENGP) are disordered. The helical transmembrane segment at 58–78 (AIGILMLSNIAFIAAFLTVFV) threads the bilayer. An N-linked (GlcNAc...) asparagine glycan is attached at Asn-135. 2 short sequence motifs (HXXHC) span residues 160–164 (HQLHC) and 187–191 (HVSHC).

It belongs to the ustYa family.

The protein resides in the membrane. It functions in the pathway mycotoxin biosynthesis. In terms of biological role, ustYa family oxidase; part of the gene cluster that mediates the biosynthesis of the phomopsins, a group of hexapeptide mycotoxins which infects lupins and causes lupinosis disease in livestock. Within the pathway, phomYb is probably involved in the construction of the macrocyclic structure of the phomopsins. The pathway starts with the processing of the precursor phomA by several endopeptidases including kexin proteases as well as the cluster-specific S41 family peptidase phomP1 and the oligopeptidase phomG to produce 10 identical copies of the hexapeptide Tyr-Val-Ile-Pro-Ile-Asp. After being excised from the precursor peptide, the core peptides are cyclized and modified post-translationally by enzymes encoded within the gene cluster. The timing and order of proteolysis of the phomA precursor and PTMs are still unknown. Two tyrosinase-like enzymes, phomQ1 and phomQ2, catalyze the chlorination and hydroxylation of Tyr, respectively. PhomYb, is proposed to be involved in the construction of the macrocyclic structure. The other 4 ustYa family proteins may be involved in PTMs that generate the unique structure of phomopsin A. PhomYa is required for the hydroxylation of C-beta of Tyr. PhomYc, phomYd, and phomYe are responsible for the biosynthesis of 2,3-dehydroisoleucine (dIle), 2,3-dehydroaspartic acid (dAsp), and 3,4-dehydroproline (dPro), respectively. While dIle formation by phomYc is indispensable for the installation of dAsp by phomYd, the order of the other PTMs have not been elucidated yet. Most of the biosynthetic enzymes likely have broad substrate specificity, and thus, there might be a metabolic grid from a precursor to phomopsin A. The enzyme(s) responsible for the biosynthesis of 3,4-dehydrovaline (dVal) have also not been identified yet. Finally, phomM acts as an S-adenosylmethionine-dependent alpha-N-methyltransferase that catalyzes two successive N-methylation reactions, converting N-desmethyl-phomopsin A to phomopsin A and phomopsin A further to an N,N-dimethylated congener called phomopsin E. This chain is UstYa family oxidase phomYb, found in Diaporthe leptostromiformis (Lupinosis disease fungus).